Reading from the N-terminus, the 546-residue chain is Probable protein kinase UbiB (546 aa).

The region spanning 124–502 (DFDIQPLASA…HVRQSQSRYL (379 aa)) is the Protein kinase domain. ATP contacts are provided by residues 130-138 (LASASIAQV) and lysine 153. Aspartate 288 acts as the Proton acceptor in catalysis. Helical transmembrane passes span 501–521 (YLLGIGATLLLSGSFLLVNRP) and 522–542 (EWGLMPSWLMVGGVVVWLVGW).

Belongs to the ABC1 family. UbiB subfamily.

The protein resides in the cell inner membrane. The protein operates within cofactor biosynthesis; ubiquinone biosynthesis [regulation]. Is probably a protein kinase regulator of UbiI activity which is involved in aerobic coenzyme Q (ubiquinone) biosynthesis. The protein is Probable protein kinase UbiB of Salmonella gallinarum (strain 287/91 / NCTC 13346).